A 448-amino-acid polypeptide reads, in one-letter code: MSKTNARKPIYKSLYVQVLAAVTIGVLLGHFSPELGAQMKPLGDGFIKLIKMIIAPIIFCTVVIGIAGMEDMKKVGKTGGLALLYFEVMSTLALVIGLIVVNVLQPGSGMHIDPASLDTKSIAAYTAPGKMQGTVDFLLNVIPTSVVDAFAKGEILQVLLFSVLFGFALHRFGGRGTMVFDFIEKFSHVLFDIVGIIMKVAPIGAFGAMAFTIGKYGLGSLFSLGKLMGAFYLTCLIFVFVVLGIVSRLHGFSVFKFVRYIKEELLIVLGTSSSESVLPRMMEKLENLGARKSVVGLVIPTGYSFNLDGTSIYLTMAAVFIAQATDTPMSLTQQITLLAVLMLTSKGAAGITGSGFIVLAATLSAVGGVPVAGLALILGIDRFMSEARALTNLVGNGVATLVVAKWTGDLDMQRLHQGLDQPSLQESQEPEVILDQQVAHMAVAKSHG.

9 consecutive transmembrane segments (helical) span residues 13–33 (SLYV…HFSP), 49–69 (LIKM…IAGM), 81–101 (LALL…LIVV), 149–169 (AFAK…GFAL), 193–213 (IVGI…AFTI), 227–247 (LMGA…GIVS), 294–314 (VVGL…SIYL), 335–355 (ITLL…TGSG), and 357–377 (IVLA…LALI).

The protein belongs to the dicarboxylate/amino acid:cation symporter (DAACS) (TC 2.A.23) family.

The protein localises to the cell inner membrane. In terms of biological role, responsible for the transport of dicarboxylates such as succinate, fumarate, and malate from the periplasm across the membrane. This chain is C4-dicarboxylate transport protein 2, found in Polaromonas naphthalenivorans (strain CJ2).